The sequence spans 146 residues: ATP synthase epsilon chain (146 aa).

The segment at 102 to 122 (QSAKKRAEQHMQEAKEKHNER) is disordered.

It belongs to the ATPase epsilon chain family. As to quaternary structure, F-type ATPases have 2 components, CF(1) - the catalytic core - and CF(0) - the membrane proton channel. CF(1) has five subunits: alpha(3), beta(3), gamma(1), delta(1), epsilon(1). CF(0) has three main subunits: a, b and c.

It is found in the cell membrane. Its function is as follows. Produces ATP from ADP in the presence of a proton gradient across the membrane. This is ATP synthase epsilon chain from Lactobacillus gasseri (strain ATCC 33323 / DSM 20243 / BCRC 14619 / CIP 102991 / JCM 1131 / KCTC 3163 / NCIMB 11718 / NCTC 13722 / AM63).